Here is a 398-residue protein sequence, read N- to C-terminus: Lysophospholipid transporter LplT (398 aa).

Helical transmembrane passes span 17 to 37 (AVLV…FAIL), 52 to 72 (ILQI…GQIA), 90 to 110 (LGAF…LVGV), 137 to 157 (GLME…GGFL), 163 to 183 (AIAL…NFFI), 226 to 246 (LFWG…PVVL), 256 to 276 (ILNV…ARFI), 285 to 305 (MPAG…HSIW), 309 to 329 (VLLI…NALL), 352 to 372 (IAML…VPVV), and 373 to 393 (TTGI…WIWN).

The protein belongs to the major facilitator superfamily. LplT (TC 2.A.1.42) family.

Its subcellular location is the cell inner membrane. Catalyzes the facilitated diffusion of 2-acyl-glycero-3-phosphoethanolamine (2-acyl-GPE) into the cell. This Photorhabdus laumondii subsp. laumondii (strain DSM 15139 / CIP 105565 / TT01) (Photorhabdus luminescens subsp. laumondii) protein is Lysophospholipid transporter LplT.